The primary structure comprises 166 residues: Lipoprotein signal peptidase (166 aa).

A run of 3 helical transmembrane segments spans residues 12-32 (WLWLVVVVLIIDLGSKYLILQ), 70-90 (WFFAGIAIGICVILLVMMYRS), and 102-122 (ALIIGGALGNLFDRLWHGFVV). Residues D123 and D141 contribute to the active site. A helical transmembrane segment spans residues 137 to 157 (FNLADTAICIGAALIVLEGFL).

It belongs to the peptidase A8 family.

Its subcellular location is the cell inner membrane. It catalyses the reaction Release of signal peptides from bacterial membrane prolipoproteins. Hydrolyzes -Xaa-Yaa-Zaa-|-(S,diacylglyceryl)Cys-, in which Xaa is hydrophobic (preferably Leu), and Yaa (Ala or Ser) and Zaa (Gly or Ala) have small, neutral side chains.. It functions in the pathway protein modification; lipoprotein biosynthesis (signal peptide cleavage). In terms of biological role, this protein specifically catalyzes the removal of signal peptides from prolipoproteins. The protein is Lipoprotein signal peptidase of Salmonella typhi.